A 585-amino-acid chain; its full sequence is MLTDMDISSRASLKNITEIGADLGLLPEEMMLFGHTKAKVELSVLQRLAGQRKGKLIIVTAVTPTPHGEGKTVTSIGLTQSLNAIGQKACACIRQPSMGPVFGVKGGAAGGGYAQVVPMQEMNLHLTGDIHAVSSAHNLGAAAIAARLFHETRLGKTEFEAQSEQAFLDIDPNEIRWHRVVDHNDRCLRQIHVGLGDNNGPEYESSFDITAASELMAILALSHDLADMRARIGRLVLALNTQGQVITAEDLGVAGAMTAIMADAIKPTLMQTLNGSPCLIHSGPFANIAHGNSSIIADDIALRLADFVVTEGGFGSDMGFEKFCNIKVRQSGQAPAAAVLVTTLKALKANSGLATEVDSNVSNIHVPNISATNINAPDQARLEAGFANLNWHINNVARYGIPVVVAINRFATDSDAELQWLIEAVNASAAFGCEISDAFIQGEAGAIALAQTVVRAAETESQFKLLYPDEASLEAKLSTLAEVGYGATGVSLSIEAKQQAQQLTALGYGHLPLCMAKTPLSISHDPSLKGVPKDFVVPVRELVLHAGAGFITALVGNVMTMPGLGLKPGYLKIDIDAKGEIVGLG.

65 to 72 serves as a coordination point for ATP; the sequence is TPHGEGKT.

Belongs to the formate--tetrahydrofolate ligase family.

The catalysed reaction is (6S)-5,6,7,8-tetrahydrofolate + formate + ATP = (6R)-10-formyltetrahydrofolate + ADP + phosphate. It functions in the pathway one-carbon metabolism; tetrahydrofolate interconversion. This chain is Formate--tetrahydrofolate ligase, found in Shewanella baltica (strain OS155 / ATCC BAA-1091).